Reading from the N-terminus, the 255-residue chain is 4-diphosphocytidyl-2-C-methyl-D-erythritol kinase (255 aa).

The active site involves Lys-6. 95–105 (PVCAGLGGGSS) provides a ligand contact to ATP. Asp-137 is a catalytic residue.

Belongs to the GHMP kinase family. IspE subfamily.

It carries out the reaction 4-CDP-2-C-methyl-D-erythritol + ATP = 4-CDP-2-C-methyl-D-erythritol 2-phosphate + ADP + H(+). It participates in isoprenoid biosynthesis; isopentenyl diphosphate biosynthesis via DXP pathway; isopentenyl diphosphate from 1-deoxy-D-xylulose 5-phosphate: step 3/6. Its function is as follows. Catalyzes the phosphorylation of the position 2 hydroxy group of 4-diphosphocytidyl-2C-methyl-D-erythritol. The polypeptide is 4-diphosphocytidyl-2-C-methyl-D-erythritol kinase (Campylobacter jejuni subsp. doylei (strain ATCC BAA-1458 / RM4099 / 269.97)).